A 644-amino-acid chain; its full sequence is uncharacterized protein (644 aa).

The segment at 65–117 (DSDVETTGGGGRGSTTSTEDRIDEHDDAIEDDGVSNEEDENQDAEQEQEVDLN) is disordered. A compositionally biased stretch (acidic residues) spans 89–114 (HDDAIEDDGVSNEEDENQDAEQEQEV).

This is an uncharacterized protein from Arabidopsis thaliana (Mouse-ear cress).